We begin with the raw amino-acid sequence, 321 residues long: Isopenicillin N synthase (321 aa).

The tract at residues 1–42 (MPVLMPSADVPTIDISPQLFGTDPTPRRTSRGRSTRPARGSG) is disordered. Arg87, Tyr91, and Tyr188 together coordinate isopenicillin N. Arg87, Tyr91, Tyr188, His213, and Asp215 together coordinate N-[(5S)-5-amino-5-carboxypentanoyl]-L-cysteinyl-D-valine. In terms of domain architecture, Fe2OG dioxygenase spans 179–287 (TLSAVSMIRY…RLSLPFFLHA (109 aa)). Fe(2+) contacts are provided by His213, Asp215, and His269. Arg278 is a binding site for 2-oxoglutarate. Ser280 provides a ligand contact to isopenicillin N. Residue Ser280 participates in N-[(5S)-5-amino-5-carboxypentanoyl]-L-cysteinyl-D-valine binding.

The protein belongs to the iron/ascorbate-dependent oxidoreductase family. Fe cation serves as cofactor. Requires L-ascorbate as cofactor.

The catalysed reaction is N-[(5S)-5-amino-5-carboxypentanoyl]-L-cysteinyl-D-valine + O2 = isopenicillin N + 2 H2O. Its pathway is antibiotic biosynthesis; penicillin G biosynthesis; penicillin G from L-alpha-aminoadipate and L-cysteine and L-valine: step 2/3. In terms of biological role, removes, in the presence of oxygen, 4 hydrogen atoms from delta-L-(alpha-aminoadipyl)-L-cysteinyl-D-valine (ACV) to form the azetidinone and thiazolidine rings of isopenicillin. The protein is Isopenicillin N synthase (pcbC) of Streptantibioticus cattleyicolor (Streptomyces cattleya).